Consider the following 466-residue polypeptide: Cytochrome b561 and DOMON domain-containing protein At3g59070 (466 aa).

The signal sequence occupies residues M1–A25. Positions L57–G172 constitute a DOMON domain. Residues R179–W380 form the Cytochrome b561 domain. The next 3 helical transmembrane spans lie at I219 to A239, W252 to L272, and T287 to L307. Heme b-binding residues include H220, H256, H289, and H325. 2 consecutive transmembrane segments (helical) span residues T327–L347 and I355–Q375.

Requires heme b as cofactor.

The protein localises to the membrane. Its function is as follows. May act as a catecholamine-responsive trans-membrane electron transporter. The polypeptide is Cytochrome b561 and DOMON domain-containing protein At3g59070 (Arabidopsis thaliana (Mouse-ear cress)).